A 128-amino-acid chain; its full sequence is Phosphoribosyl-AMP cyclohydrolase (128 aa).

Asp94 lines the Mg(2+) pocket. Cys95 contributes to the Zn(2+) binding site. Mg(2+)-binding residues include Asp96 and Asp98. Zn(2+) contacts are provided by Cys111 and Cys118.

It belongs to the PRA-CH family. As to quaternary structure, homodimer. It depends on Mg(2+) as a cofactor. Zn(2+) is required as a cofactor.

It is found in the cytoplasm. The enzyme catalyses 1-(5-phospho-beta-D-ribosyl)-5'-AMP + H2O = 1-(5-phospho-beta-D-ribosyl)-5-[(5-phospho-beta-D-ribosylamino)methylideneamino]imidazole-4-carboxamide. It functions in the pathway amino-acid biosynthesis; L-histidine biosynthesis; L-histidine from 5-phospho-alpha-D-ribose 1-diphosphate: step 3/9. Its function is as follows. Catalyzes the hydrolysis of the adenine ring of phosphoribosyl-AMP. The polypeptide is Phosphoribosyl-AMP cyclohydrolase (Streptomyces coelicolor (strain ATCC BAA-471 / A3(2) / M145)).